Consider the following 224-residue polypeptide: 7-cyano-7-deazaguanine synthase (224 aa).

An ATP-binding site is contributed by 8 to 18 (LSGGMDSAAVI). Zn(2+) is bound by residues Cys-186, Cys-196, Cys-199, and Cys-202.

Belongs to the QueC family. Requires Zn(2+) as cofactor.

It catalyses the reaction 7-carboxy-7-deazaguanine + NH4(+) + ATP = 7-cyano-7-deazaguanine + ADP + phosphate + H2O + H(+). It participates in purine metabolism; 7-cyano-7-deazaguanine biosynthesis. Functionally, catalyzes the ATP-dependent conversion of 7-carboxy-7-deazaguanine (CDG) to 7-cyano-7-deazaguanine (preQ(0)). The protein is 7-cyano-7-deazaguanine synthase of Xanthomonas campestris pv. campestris (strain 8004).